Reading from the N-terminus, the 141-residue chain is Nucleoside diphosphate kinase (141 aa).

ATP-binding residues include K11, F59, R87, T93, R104, and N114. The active-site Pros-phosphohistidine intermediate is the H117.

It belongs to the NDK family. Homotetramer. The cofactor is Mg(2+).

The protein resides in the cytoplasm. It carries out the reaction a 2'-deoxyribonucleoside 5'-diphosphate + ATP = a 2'-deoxyribonucleoside 5'-triphosphate + ADP. The enzyme catalyses a ribonucleoside 5'-diphosphate + ATP = a ribonucleoside 5'-triphosphate + ADP. Functionally, major role in the synthesis of nucleoside triphosphates other than ATP. The ATP gamma phosphate is transferred to the NDP beta phosphate via a ping-pong mechanism, using a phosphorylated active-site intermediate. The chain is Nucleoside diphosphate kinase from Herminiimonas arsenicoxydans.